Consider the following 285-residue polypeptide: Acetyl-coenzyme A carboxylase carboxyl transferase subunit beta (285 aa).

The CoA carboxyltransferase N-terminal domain maps to Ile-29–Lys-285. The Zn(2+) site is built by Cys-33, Cys-36, Cys-52, and Cys-55. A C4-type zinc finger spans residues Cys-33 to Cys-55.

This sequence belongs to the AccD/PCCB family. Acetyl-CoA carboxylase is a heterohexamer composed of biotin carboxyl carrier protein (AccB), biotin carboxylase (AccC) and two subunits each of ACCase subunit alpha (AccA) and ACCase subunit beta (AccD). Zn(2+) is required as a cofactor.

It localises to the cytoplasm. It catalyses the reaction N(6)-carboxybiotinyl-L-lysyl-[protein] + acetyl-CoA = N(6)-biotinyl-L-lysyl-[protein] + malonyl-CoA. Its pathway is lipid metabolism; malonyl-CoA biosynthesis; malonyl-CoA from acetyl-CoA: step 1/1. In terms of biological role, component of the acetyl coenzyme A carboxylase (ACC) complex. Biotin carboxylase (BC) catalyzes the carboxylation of biotin on its carrier protein (BCCP) and then the CO(2) group is transferred by the transcarboxylase to acetyl-CoA to form malonyl-CoA. The polypeptide is Acetyl-coenzyme A carboxylase carboxyl transferase subunit beta (Staphylococcus aureus (strain Mu3 / ATCC 700698)).